The chain runs to 244 residues: Small ribosomal subunit protein eS4 (244 aa).

Residues Leu43–Glu106 enclose the S4 RNA-binding domain.

The protein belongs to the eukaryotic ribosomal protein eS4 family.

The chain is Small ribosomal subunit protein eS4 from Methanococcus maripaludis (strain C5 / ATCC BAA-1333).